The primary structure comprises 260 residues: Pyridoxine 5'-phosphate synthase (260 aa).

N15 contacts 3-amino-2-oxopropyl phosphate. 17–18 serves as a coordination point for 1-deoxy-D-xylulose 5-phosphate; it reads DH. Residue R26 participates in 3-amino-2-oxopropyl phosphate binding. The active-site Proton acceptor is the H51. Positions 53 and 58 each coordinate 1-deoxy-D-xylulose 5-phosphate. The Proton acceptor role is filled by E78. T108 is a binding site for 1-deoxy-D-xylulose 5-phosphate. H199 serves as the catalytic Proton donor. 3-amino-2-oxopropyl phosphate contacts are provided by residues G200 and 221–222; that span reads GH.

Belongs to the PNP synthase family. In terms of assembly, homooctamer; tetramer of dimers.

The protein localises to the cytoplasm. The enzyme catalyses 3-amino-2-oxopropyl phosphate + 1-deoxy-D-xylulose 5-phosphate = pyridoxine 5'-phosphate + phosphate + 2 H2O + H(+). The protein operates within cofactor biosynthesis; pyridoxine 5'-phosphate biosynthesis; pyridoxine 5'-phosphate from D-erythrose 4-phosphate: step 5/5. In terms of biological role, catalyzes the complicated ring closure reaction between the two acyclic compounds 1-deoxy-D-xylulose-5-phosphate (DXP) and 3-amino-2-oxopropyl phosphate (1-amino-acetone-3-phosphate or AAP) to form pyridoxine 5'-phosphate (PNP) and inorganic phosphate. This Cupriavidus metallidurans (strain ATCC 43123 / DSM 2839 / NBRC 102507 / CH34) (Ralstonia metallidurans) protein is Pyridoxine 5'-phosphate synthase.